The sequence spans 304 residues: Nod factor export ATP-binding protein I (304 aa).

In terms of domain architecture, ABC transporter spans 6–236 (IDFRNVEKRF…EIGCDVIEIY (231 aa)). 38-45 (GPNGAGKT) provides a ligand contact to ATP.

The protein belongs to the ABC transporter superfamily. Lipooligosaccharide exporter (TC 3.A.1.102) family. The complex is composed of two ATP-binding proteins (NodI) and two transmembrane proteins (NodJ).

The protein resides in the cell inner membrane. Its function is as follows. Part of the ABC transporter complex NodIJ involved in the export of the nodulation factors (Nod factors), the bacterial signal molecules that induce symbiosis and subsequent nodulation induction. Nod factors are LCO (lipo-chitin oligosaccharide), a modified beta-1,4-linked N-acetylglucosamine oligosaccharide. This subunit is responsible for energy coupling to the transport system. The polypeptide is Nod factor export ATP-binding protein I (Burkholderia lata (strain ATCC 17760 / DSM 23089 / LMG 22485 / NCIMB 9086 / R18194 / 383)).